A 236-amino-acid polypeptide reads, in one-letter code: Peroxisomal membrane protein PMP27 (236 aa).

This sequence belongs to the peroxin-11 family. In terms of assembly, homooligomer. Interacts with PEX34.

It is found in the peroxisome membrane. In terms of biological role, involved in peroxisomal proliferation. Promotes peroxisome division and biogenesis. The polypeptide is Peroxisomal membrane protein PMP27 (PEX11) (Saccharomyces cerevisiae (strain ATCC 204508 / S288c) (Baker's yeast)).